The sequence spans 209 residues: MKTSEWIDISQPLNNDIATWPGDTPFSYEVSWPKEESGSVNVGKLTMSIHTGTHIDAPFHFDNEGKKVIDLDIQVYVGPVRIIDVSNLESIGKKELENFNLEGVERLLLRTSSHGKVNEFPDVIPHLHADIAPFLSEKGIRLIGVDVPSVDPLDDKELEAHHQLFKHGIHILENVVLDHVADGDYELIALPLALTDADGSPVRAVIRPI.

A substrate-binding site is contributed by tryptophan 20. Zn(2+) contacts are provided by histidine 50, histidine 54, and aspartate 56. The Proton donor/acceptor role is filled by histidine 60. The Zn(2+) site is built by histidine 161 and glutamate 173.

The protein belongs to the Cyclase 1 superfamily. KynB family. Homodimer. Zn(2+) is required as a cofactor.

The enzyme catalyses N-formyl-L-kynurenine + H2O = L-kynurenine + formate + H(+). It participates in amino-acid degradation; L-tryptophan degradation via kynurenine pathway; L-kynurenine from L-tryptophan: step 2/2. Its function is as follows. Catalyzes the hydrolysis of N-formyl-L-kynurenine to L-kynurenine, the second step in the kynurenine pathway of tryptophan degradation. The chain is Kynurenine formamidase from Bacillus cereus (strain ATCC 10987 / NRS 248).